We begin with the raw amino-acid sequence, 224 residues long: Thymidine kinase, cytosolic (224 aa).

A Phosphoserine modification is found at serine 13. ATP is bound by residues 26–33 (GPMFSGKS), 58–60 (DTR), and 98–101 (DEGQ). Glutamate 99 (proton acceptor) is an active-site residue. Phenylalanine 129 lines the substrate pocket. 2 residues coordinate Zn(2+): cysteine 154 and cysteine 157. Substrate is bound by residues 173-177 (VEVIG) and tyrosine 182. 2 residues coordinate Zn(2+): cysteine 186 and cysteine 189. The KEN box signature appears at 203–205 (KEN).

The protein belongs to the thymidine kinase family. In terms of assembly, homotetramer. Tetramerization from dimerization is induced by ATP and increases catalytic efficiency due to a high affinity for thymidine. Tetramerization is inhibited by phosphorylation at Ser-13. Interacts (via the KEN box) with FZR1. Post-translationally, phosphorylated on Ser-13 in mitosis. Phosphorylation of Ser-13 by CDK1 during mitosis reduces homotetramerization and catalytic efficiency when DNA replication is complete and intracellular TK1 is still present at a high level. In terms of processing, polyubiquitinated. Postmitosis, ubiquitination leads to proteasomal degradation. The KEN box sequence located at the C-terminal region targets for degradation by the anaphase promoting complex (APC/C) activated and rate-limited by FZR1.

Its subcellular location is the cytoplasm. The enzyme catalyses thymidine + ATP = dTMP + ADP + H(+). Cell-cycle-regulated enzyme of importance in nucleotide metabolism. Catalyzes the first enzymatic step in the salvage pathway converting thymidine into thymidine monophosphate. Transcriptional regulation limits expression to the S phase of the cell cycle and transient expression coincides with the oscillation in the intracellular dTTP concentration. In Gallus gallus (Chicken), this protein is Thymidine kinase, cytosolic (TK1).